We begin with the raw amino-acid sequence, 95 residues long: MAAARLCLSLLLLSTCVALLLQPLLGAQGAPLEPVYPGDNATPEQMAQYAADLRRYINMLTRPRYGKRHKEDTLAFSEWGSPHAAVPRELSPLDL.

The first 29 residues, 1–29 (MAAARLCLSLLLLSTCVALLLQPLLGAQG), serve as a signal peptide directing secretion. Tyrosine 65 is subject to Tyrosine amide. The propeptide occupies 89-95 (ELSPLDL).

It belongs to the NPY family.

The protein resides in the secreted. In terms of biological role, hormone secreted by pancreatic cells that acts as a regulator of pancreatic and gastrointestinal functions probably by signaling through the G protein-coupled receptor NPY4R2. The polypeptide is Pancreatic polypeptide prohormone (Homo sapiens (Human)).